A 238-amino-acid chain; its full sequence is 2,3,4,5-tetrahydropyridine-2,6-dicarboxylate N-acetyltransferase (238 aa).

This sequence belongs to the transferase hexapeptide repeat family. DapH subfamily.

The enzyme catalyses (S)-2,3,4,5-tetrahydrodipicolinate + acetyl-CoA + H2O = L-2-acetamido-6-oxoheptanedioate + CoA. It functions in the pathway amino-acid biosynthesis; L-lysine biosynthesis via DAP pathway; LL-2,6-diaminopimelate from (S)-tetrahydrodipicolinate (acetylase route): step 1/3. Catalyzes the transfer of an acetyl group from acetyl-CoA to tetrahydrodipicolinate. This chain is 2,3,4,5-tetrahydropyridine-2,6-dicarboxylate N-acetyltransferase, found in Thermotoga neapolitana (strain ATCC 49049 / DSM 4359 / NBRC 107923 / NS-E).